The chain runs to 90 residues: uncharacterized protein (90 aa).

The stretch at Asp36–Met82 forms a coiled coil.

This is an uncharacterized protein from Bacillus subtilis (strain 168).